The primary structure comprises 123 residues: U11/U12 small nuclear ribonucleoprotein 25 kDa protein (123 aa).

The 92-residue stretch at 32–123 (MTVRVCKMDG…VSFIKKLRQK (92 aa)) folds into the Ubiquitin-like domain.

As to quaternary structure, component of the U11/U12 snRNPs that are part of the U12-type spliceosome.

It localises to the nucleus. The protein is U11/U12 small nuclear ribonucleoprotein 25 kDa protein (Snrnp25) of Mus musculus (Mouse).